A 99-amino-acid chain; its full sequence is Integration host factor subunit alpha (99 aa).

The tract at residues 49 to 75 is disordered; sequence FGNFDLRDKNQRPGRNPKTGEDIPITA.

This sequence belongs to the bacterial histone-like protein family. As to quaternary structure, heterodimer of an alpha and a beta chain.

In terms of biological role, this protein is one of the two subunits of integration host factor, a specific DNA-binding protein that functions in genetic recombination as well as in transcriptional and translational control. The protein is Integration host factor subunit alpha of Salmonella arizonae (strain ATCC BAA-731 / CDC346-86 / RSK2980).